Here is a 317-residue protein sequence, read N- to C-terminus: Ribosomal protein L11 methyltransferase (317 aa).

The S-adenosyl-L-methionine site is built by threonine 158, glycine 179, aspartate 201, and asparagine 244.

This sequence belongs to the methyltransferase superfamily. PrmA family.

It is found in the cytoplasm. The catalysed reaction is L-lysyl-[protein] + 3 S-adenosyl-L-methionine = N(6),N(6),N(6)-trimethyl-L-lysyl-[protein] + 3 S-adenosyl-L-homocysteine + 3 H(+). In terms of biological role, methylates ribosomal protein L11. This chain is Ribosomal protein L11 methyltransferase, found in Streptococcus thermophilus (strain CNRZ 1066).